A 734-amino-acid polypeptide reads, in one-letter code: Probable carboxypeptidase X1 (734 aa).

The first 20 residues, 1–20 (MWGLLLALAAFAPAVGPALG), serve as a signal peptide directing secretion. The segment at 30 to 62 (AQPGTTKVPGSTPALHSSPAQPPAETANGTSEQ) is disordered. Residues 32–48 (PGTTKVPGSTPALHSSP) are compositionally biased toward polar residues. N-linked (GlcNAc...) asparagine glycosylation is found at asparagine 57, asparagine 210, asparagine 220, and asparagine 318. The region spanning 113 to 274 (TGCPPLGLES…PCLRAEILAC (162 aa)) is the F5/8 type C domain. A disulfide bridge links cysteine 115 with cysteine 274. Positions 298 to 621 (QHHNYKAMRK…DALLTYLEQV (324 aa)) constitute a Peptidase M14 domain. Zn(2+) contacts are provided by histidine 360 and glutamate 363. Residues asparagine 428 and asparagine 472 are each glycosylated (N-linked (GlcNAc...) asparagine). Histidine 498 contributes to the Zn(2+) binding site. Catalysis depends on glutamate 591, which acts as the Proton donor/acceptor.

It belongs to the peptidase M14 family. Requires Zn(2+) as cofactor.

The protein resides in the secreted. Its function is as follows. May be involved in cell-cell interactions. No carboxypeptidase activity was found yet. This Homo sapiens (Human) protein is Probable carboxypeptidase X1 (CPXM1).